The primary structure comprises 161 residues: Protein-export protein SecB (161 aa).

It belongs to the SecB family. In terms of assembly, homotetramer, a dimer of dimers. One homotetramer interacts with 1 SecA dimer.

It localises to the cytoplasm. Its function is as follows. One of the proteins required for the normal export of preproteins out of the cell cytoplasm. It is a molecular chaperone that binds to a subset of precursor proteins, maintaining them in a translocation-competent state. It also specifically binds to its receptor SecA. The polypeptide is Protein-export protein SecB (Shewanella sp. (strain ANA-3)).